A 307-amino-acid polypeptide reads, in one-letter code: MNKVIAIVGPTAVGKTALSIKLAHEFDGEVISGDSMQVYRRLDIGTAKVTPEEMGDVPHHLIDICNIEERFSAARFKKLADQKIDEIAQRNHLPIIAGGTGFYLQTLTDNLALGSDQFDQQTLDIRNHWKEVAEEKGAEYVWEQLNKLDPVASARIPKSNTRRVIRALEVIKKTGQLFSNQPHFKATNDFLLIGLTTDRPVLYDRINKRVDLMIQNGLLEEAKWLFDQGGEDLPAGKGIGYHELFPYFRGEISLDEAVEKIKQDSRHYAKRQLTWFRNKADTHWFDILRHPDDINQIKQFINDWLKK.

9–16 (GPTAVGKT) provides a ligand contact to ATP. Residue 11–16 (TAVGKT) participates in substrate binding. Positions 34 to 37 (DSMQ) are interaction with substrate tRNA.

This sequence belongs to the IPP transferase family. In terms of assembly, monomer. Requires Mg(2+) as cofactor.

The catalysed reaction is adenosine(37) in tRNA + dimethylallyl diphosphate = N(6)-dimethylallyladenosine(37) in tRNA + diphosphate. Catalyzes the transfer of a dimethylallyl group onto the adenine at position 37 in tRNAs that read codons beginning with uridine, leading to the formation of N6-(dimethylallyl)adenosine (i(6)A). This chain is tRNA dimethylallyltransferase, found in Limosilactobacillus reuteri (strain DSM 20016) (Lactobacillus reuteri).